Here is a 507-residue protein sequence, read N- to C-terminus: Phosphoenolpyruvate carboxylase (507 aa).

The interval 1-25 (MHKIDRKIPNIMGTQHPDNAGVPFF) is disordered.

Belongs to the PEPCase type 2 family. Homotetramer. Mg(2+) is required as a cofactor.

The catalysed reaction is oxaloacetate + phosphate = phosphoenolpyruvate + hydrogencarbonate. Functionally, catalyzes the irreversible beta-carboxylation of phosphoenolpyruvate (PEP) to form oxaloacetate (OAA), a four-carbon dicarboxylic acid source for the tricarboxylic acid cycle. This chain is Phosphoenolpyruvate carboxylase, found in Oenococcus oeni (strain ATCC BAA-331 / PSU-1).